The following is a 305-amino-acid chain: Tyrosine recombinase XerC (305 aa).

Positions 4–95 (TSIQALINKW…AVKNFYRFLE (92 aa)) constitute a Core-binding (CB) domain. In terms of domain architecture, Tyr recombinase spans 116-298 (LLPKALSEDD…SIKHLEAVYT (183 aa)). Active-site residues include R159, K182, H250, R253, and H276. Y285 acts as the O-(3'-phospho-DNA)-tyrosine intermediate in catalysis.

It belongs to the 'phage' integrase family. XerC subfamily. As to quaternary structure, forms a cyclic heterotetrameric complex composed of two molecules of XerC and two molecules of XerD.

It localises to the cytoplasm. Site-specific tyrosine recombinase, which acts by catalyzing the cutting and rejoining of the recombining DNA molecules. The XerC-XerD complex is essential to convert dimers of the bacterial chromosome into monomers to permit their segregation at cell division. It also contributes to the segregational stability of plasmids. In Rickettsia peacockii (strain Rustic), this protein is Tyrosine recombinase XerC.